Consider the following 162-residue polypeptide: 2-C-methyl-D-erythritol 2,4-cyclodiphosphate synthase (162 aa).

Residues Asp12 and His14 each coordinate a divalent metal cation. 4-CDP-2-C-methyl-D-erythritol 2-phosphate is bound by residues 12–14 (DVH) and 38–39 (HS). His46 contacts a divalent metal cation. 4-CDP-2-C-methyl-D-erythritol 2-phosphate is bound by residues 60 to 62 (DIG), 136 to 139 (TTTE), Phe143, and Arg146.

The protein belongs to the IspF family. As to quaternary structure, homotrimer. The cofactor is a divalent metal cation.

The enzyme catalyses 4-CDP-2-C-methyl-D-erythritol 2-phosphate = 2-C-methyl-D-erythritol 2,4-cyclic diphosphate + CMP. The protein operates within isoprenoid biosynthesis; isopentenyl diphosphate biosynthesis via DXP pathway; isopentenyl diphosphate from 1-deoxy-D-xylulose 5-phosphate: step 4/6. In terms of biological role, involved in the biosynthesis of isopentenyl diphosphate (IPP) and dimethylallyl diphosphate (DMAPP), two major building blocks of isoprenoid compounds. Catalyzes the conversion of 4-diphosphocytidyl-2-C-methyl-D-erythritol 2-phosphate (CDP-ME2P) to 2-C-methyl-D-erythritol 2,4-cyclodiphosphate (ME-CPP) with a corresponding release of cytidine 5-monophosphate (CMP). This is 2-C-methyl-D-erythritol 2,4-cyclodiphosphate synthase from Porphyromonas gingivalis (strain ATCC 33277 / DSM 20709 / CIP 103683 / JCM 12257 / NCTC 11834 / 2561).